Reading from the N-terminus, the 576-residue chain is Sulfite reductase [NADPH] hemoprotein beta-component (576 aa).

Residues C435, C441, C480, and C484 each contribute to the [4Fe-4S] cluster site. C484 lines the siroheme pocket.

The protein belongs to the nitrite and sulfite reductase 4Fe-4S domain family. As to quaternary structure, alpha(8)-beta(8). The alpha component is a flavoprotein, the beta component is a hemoprotein. Siroheme is required as a cofactor. Requires [4Fe-4S] cluster as cofactor.

The catalysed reaction is hydrogen sulfide + 3 NADP(+) + 3 H2O = sulfite + 3 NADPH + 4 H(+). The protein operates within sulfur metabolism; hydrogen sulfide biosynthesis; hydrogen sulfide from sulfite (NADPH route): step 1/1. Functionally, component of the sulfite reductase complex that catalyzes the 6-electron reduction of sulfite to sulfide. This is one of several activities required for the biosynthesis of L-cysteine from sulfate. The protein is Sulfite reductase [NADPH] hemoprotein beta-component of Proteus mirabilis (strain HI4320).